We begin with the raw amino-acid sequence, 355 residues long: NADH dehydrogenase [ubiquinone] 1 alpha subcomplex subunit 10, mitochondrial (355 aa).

The transit peptide at 1–35 (MALRLLKLAATSASARVVAAGAQRVRGIHSSVQCK) directs the protein to the mitochondrion. Serine 250 carries the phosphoserine; by PINK1 modification. Lysine 285 is subject to N6-succinyllysine.

It belongs to the complex I NDUFA10 subunit family. In terms of assembly, complex I is composed of 45 different subunits. This a component of the hydrophobic protein fraction. FAD serves as cofactor. Post-translationally, phosphorylation at Ser-250 by PINK1 is required for the binding and/or reduction of the complex I substrate ubiquinone.

It is found in the mitochondrion matrix. Accessory subunit of the mitochondrial membrane respiratory chain NADH dehydrogenase (Complex I), that is believed not to be involved in catalysis. Complex I functions in the transfer of electrons from NADH to the respiratory chain. The immediate electron acceptor for the enzyme is believed to be ubiquinone. In Homo sapiens (Human), this protein is NADH dehydrogenase [ubiquinone] 1 alpha subcomplex subunit 10, mitochondrial (NDUFA10).